The sequence spans 741 residues: Cysteine--tRNA ligase, cytoplasmic (741 aa).

Zn(2+) is bound at residue cysteine 46. Residues 48-58 (PTVYDASHMGH) carry the 'HIGH' region motif. A Phosphoserine modification is found at serine 297. Residues cysteine 340, histidine 365, and glutamate 369 each contribute to the Zn(2+) site. Residues 398–402 (KMSKS) carry the 'KMSKS' region motif. ATP is bound at residue lysine 401. Residues 697–718 (FDENGLPTHDKEGKEVSKGQIK) form a disordered region. A compositionally biased stretch (basic and acidic residues) spans 704-713 (THDKEGKEVS).

This sequence belongs to the class-I aminoacyl-tRNA synthetase family. It depends on Zn(2+) as a cofactor.

Its subcellular location is the cytoplasm. The catalysed reaction is tRNA(Cys) + L-cysteine + ATP = L-cysteinyl-tRNA(Cys) + AMP + diphosphate. This is Cysteine--tRNA ligase, cytoplasmic from Drosophila melanogaster (Fruit fly).